Reading from the N-terminus, the 580-residue chain is DNA ligase B (580 aa).

Residue lysine 135 is the N6-AMP-lysine intermediate of the active site.

It belongs to the NAD-dependent DNA ligase family. LigB subfamily.

The enzyme catalyses NAD(+) + (deoxyribonucleotide)n-3'-hydroxyl + 5'-phospho-(deoxyribonucleotide)m = (deoxyribonucleotide)n+m + AMP + beta-nicotinamide D-nucleotide.. In terms of biological role, catalyzes the formation of phosphodiester linkages between 5'-phosphoryl and 3'-hydroxyl groups in double-stranded DNA using NAD as a coenzyme and as the energy source for the reaction. The sequence is that of DNA ligase B from Photorhabdus laumondii subsp. laumondii (strain DSM 15139 / CIP 105565 / TT01) (Photorhabdus luminescens subsp. laumondii).